Reading from the N-terminus, the 78-residue chain is MARVCQVTGKAPMVGNNVSHANNKTKRRFLPNLQNRRFWSESENRWIRLRVSNAALRTIDKKGIDVVVSELRARGEKV.

The protein belongs to the bacterial ribosomal protein bL28 family.

This Aromatoleum aromaticum (strain DSM 19018 / LMG 30748 / EbN1) (Azoarcus sp. (strain EbN1)) protein is Large ribosomal subunit protein bL28.